Here is a 121-residue protein sequence, read N- to C-terminus: MPKKRSSPNRNVQIADQIQRDLSDLLREVKDPRIGIVTIQSVELTPDYAHAKVYFTTLTGDPQQTLEALTHAAGHLHNQLFKRLHIHTVPTLHFHYDKTIERAVEMSRLIDEANANRAKED.

It belongs to the RbfA family. In terms of assembly, monomer. Binds 30S ribosomal subunits, but not 50S ribosomal subunits or 70S ribosomes.

It is found in the cytoplasm. Its function is as follows. One of several proteins that assist in the late maturation steps of the functional core of the 30S ribosomal subunit. Associates with free 30S ribosomal subunits (but not with 30S subunits that are part of 70S ribosomes or polysomes). Required for efficient processing of 16S rRNA. May interact with the 5'-terminal helix region of 16S rRNA. The polypeptide is Ribosome-binding factor A (Paraburkholderia phytofirmans (strain DSM 17436 / LMG 22146 / PsJN) (Burkholderia phytofirmans)).